The chain runs to 373 residues: tRNA-specific 2-thiouridylase MnmA (373 aa).

ATP contacts are provided by residues G12–S19 and M38. Positions N98–D100 are interaction with target base in tRNA. Catalysis depends on C103, which acts as the Nucleophile. A disulfide bridge connects residues C103 and C200. Residue G127 coordinates ATP. Residues K150 to Q152 are interaction with tRNA. The Cysteine persulfide intermediate role is filled by C200. The interaction with tRNA stretch occupies residues R312–Y313.

This sequence belongs to the MnmA/TRMU family.

The protein resides in the cytoplasm. The catalysed reaction is S-sulfanyl-L-cysteinyl-[protein] + uridine(34) in tRNA + AH2 + ATP = 2-thiouridine(34) in tRNA + L-cysteinyl-[protein] + A + AMP + diphosphate + H(+). Functionally, catalyzes the 2-thiolation of uridine at the wobble position (U34) of tRNA, leading to the formation of s(2)U34. This Streptococcus pneumoniae (strain JJA) protein is tRNA-specific 2-thiouridylase MnmA.